The sequence spans 329 residues: Zygote arrest protein 1 (329 aa).

Disordered stretches follow at residues 106 to 132 (LRRRRQEVQTPGSPVSSGGVRFPRTQA) and 146 to 218 (FREE…DDLK). Over residues 149–162 (EGEEEEDTDLEVTE) the composition is skewed to acidic residues. The segment covering 166–177 (SAEKLESAEKNV) has biased composition (basic and acidic residues). Residues 231–314 (KYGFYHCKDC…RQDLCGRCKG (84 aa)) form a 3CxxC-type zinc finger.

This sequence belongs to the ZAR1 family. Specifically expressed in ovaries but absent in testes.

Its subcellular location is the cytoplasm. It is found in the cytoplasmic ribonucleoprotein granule. MRNA-binding protein required for maternal mRNA storage, translation and degradation during oocyte maturation. Probably promotes formation of some phase-separated membraneless compartment that stores maternal mRNAs in oocytes: acts by undergoing liquid-liquid phase separation upon binding to maternal mRNAs. Binds to the 3'-UTR of zona pellucida mRNAs, inhibiting their translation. The polypeptide is Zygote arrest protein 1 (Danio rerio (Zebrafish)).